A 642-amino-acid polypeptide reads, in one-letter code: Threonine--tRNA ligase (642 aa).

One can recognise a TGS domain in the interval 1–61; the sequence is MPVITLPDGS…ETDAELSIIT (61 aa). A catalytic region spans residues 243–534; that stretch reads DHRKIGKQLD…LIEEYAGRFP (292 aa). Cysteine 334, histidine 385, and histidine 511 together coordinate Zn(2+).

This sequence belongs to the class-II aminoacyl-tRNA synthetase family. Homodimer. The cofactor is Zn(2+).

The protein resides in the cytoplasm. It catalyses the reaction tRNA(Thr) + L-threonine + ATP = L-threonyl-tRNA(Thr) + AMP + diphosphate + H(+). Catalyzes the attachment of threonine to tRNA(Thr) in a two-step reaction: L-threonine is first activated by ATP to form Thr-AMP and then transferred to the acceptor end of tRNA(Thr). Also edits incorrectly charged L-seryl-tRNA(Thr). This chain is Threonine--tRNA ligase, found in Shewanella sp. (strain W3-18-1).